The following is a 282-amino-acid chain: NADPH-dependent 7-cyano-7-deazaguanine reductase (282 aa).

88–90 is a substrate binding site; it reads IES. NADPH is bound at residue 90-91; sequence SK. Cys190 (thioimide intermediate) is an active-site residue. Asp197 (proton donor) is an active-site residue. 229–230 serves as a coordination point for substrate; the sequence is HE. Residue 258 to 259 coordinates NADPH; sequence RG.

Belongs to the GTP cyclohydrolase I family. QueF type 2 subfamily. Homodimer.

It localises to the cytoplasm. The enzyme catalyses 7-aminomethyl-7-carbaguanine + 2 NADP(+) = 7-cyano-7-deazaguanine + 2 NADPH + 3 H(+). Its pathway is tRNA modification; tRNA-queuosine biosynthesis. Catalyzes the NADPH-dependent reduction of 7-cyano-7-deazaguanine (preQ0) to 7-aminomethyl-7-deazaguanine (preQ1). This is NADPH-dependent 7-cyano-7-deazaguanine reductase from Pectobacterium carotovorum subsp. carotovorum (strain PC1).